The sequence spans 185 residues: Ribosome-recycling factor (185 aa).

It belongs to the RRF family.

It is found in the cytoplasm. Functionally, responsible for the release of ribosomes from messenger RNA at the termination of protein biosynthesis. May increase the efficiency of translation by recycling ribosomes from one round of translation to another. This chain is Ribosome-recycling factor, found in Geobacillus thermodenitrificans (strain NG80-2).